Here is a 181-residue protein sequence, read N- to C-terminus: Peptidyl-prolyl cis-trans isomerase H (181 aa).

Residues 17 to 180 (FFDITLGGES…QDVTIIQCGE (164 aa)) enclose the PPIase cyclophilin-type domain.

Belongs to the cyclophilin-type PPIase family. PPIase H subfamily.

Its subcellular location is the nucleus. The catalysed reaction is [protein]-peptidylproline (omega=180) = [protein]-peptidylproline (omega=0). PPIases accelerate the folding of proteins. It catalyzes the cis-trans isomerization of proline imidic peptide bonds in oligopeptides. In Aspergillus oryzae (strain ATCC 42149 / RIB 40) (Yellow koji mold), this protein is Peptidyl-prolyl cis-trans isomerase H (cyp3).